A 109-amino-acid polypeptide reads, in one-letter code: Cytochrome c6 (109 aa).

Positions 1–25 are cleaved as a signal peptide; the sequence is MFKNIIIVVAVTLCALFTNEHVVYS. Residues Cys-39, Cys-42, His-43, and Met-83 each contribute to the heme c site.

It belongs to the cytochrome c family. PetJ subfamily. As to quaternary structure, monomer. In terms of processing, binds 1 heme c group covalently per subunit.

The protein localises to the plastid. The protein resides in the chloroplast thylakoid lumen. Functionally, functions as an electron carrier between membrane-bound cytochrome b6-f and photosystem I in oxygenic photosynthesis. This is Cytochrome c6 (petJ) from Cyanidium caldarium (Red alga).